The primary structure comprises 160 residues: Protein-export protein SecB (160 aa).

The protein belongs to the SecB family. In terms of assembly, homotetramer, a dimer of dimers. One homotetramer interacts with 1 SecA dimer.

It localises to the cytoplasm. One of the proteins required for the normal export of preproteins out of the cell cytoplasm. It is a molecular chaperone that binds to a subset of precursor proteins, maintaining them in a translocation-competent state. It also specifically binds to its receptor SecA. In Beijerinckia indica subsp. indica (strain ATCC 9039 / DSM 1715 / NCIMB 8712), this protein is Protein-export protein SecB.